A 423-amino-acid polypeptide reads, in one-letter code: Diaminobutyrate--2-oxoglutarate transaminase (423 aa).

Position 271 is an N6-(pyridoxal phosphate)lysine (K271).

The protein belongs to the class-III pyridoxal-phosphate-dependent aminotransferase family. Pyridoxal 5'-phosphate serves as cofactor.

It carries out the reaction L-2,4-diaminobutanoate + 2-oxoglutarate = L-aspartate 4-semialdehyde + L-glutamate. Its pathway is amine and polyamine biosynthesis; ectoine biosynthesis; L-ectoine from L-aspartate 4-semialdehyde: step 1/3. Catalyzes reversively the conversion of L-aspartate beta-semialdehyde (ASA) to L-2,4-diaminobutyrate (DABA) by transamination with L-glutamate. This Streptomyces coelicolor (strain ATCC BAA-471 / A3(2) / M145) protein is Diaminobutyrate--2-oxoglutarate transaminase (ectB).